Reading from the N-terminus, the 756-residue chain is U3 small nucleolar RNA-associated protein 14 homolog B (756 aa).

Residues 21-44 (DLPENYPLSTSEDEGDSDGEGKRQ) are disordered. Residues Ser29, Ser31, and Ser37 each carry the phosphoserine modification. 2 coiled-coil regions span residues 215 to 244 (SLEE…RREK) and 316 to 345 (PEAR…SEEE). Composition is skewed to basic and acidic residues over residues 419-428 (KERSFQERVD) and 452-468 (LNKE…SSEE). 2 disordered regions span residues 419 to 468 (KERS…SSEE) and 497 to 539 (QQGE…KKKK). A coiled-coil region spans residues 449-476 (LQKLNKESHQSDNQKVSSEENVLHIQRE). Phosphoserine is present on Ser554.

This sequence belongs to the UTP14 family. In terms of tissue distribution, expressed predominantly in germ cells of the testis; weakly expressed in brain.

The protein resides in the nucleus. It localises to the nucleolus. Essential for spermatogenesis. May be required specifically for ribosome biogenesis and hence protein synthesis during male meiosis. This Mus musculus (Mouse) protein is U3 small nucleolar RNA-associated protein 14 homolog B (Utp14b).